The primary structure comprises 173 residues: 5-hydroxymethyl-dUMP N-hydrolase (173 aa).

The residue at position 2 (alanine 2) is an N-acetylalanine. Glycine 16 is a 5-hydroxymethyl-dUMP binding site. Serine 17 bears the Phosphoserine mark. The 5-hydroxymethyl-dUMP site is built by isoleucine 18, arginine 19, glycine 20, serine 87, glycine 89, and glutamate 93. Serine 87 bears the Phosphoserine mark. A phosphoserine mark is found at serine 112, serine 117, serine 127, and serine 158. Serine 117 is a 5-hydroxymethyl-dUMP binding site.

This sequence belongs to the 2'-deoxynucleoside 5'-phosphate N-hydrolase 1 family. Monomer and homodimer.

The protein resides in the cytoplasm. Its subcellular location is the nucleus. The catalysed reaction is 5-hydroxymethyl-dUMP + H2O = 5-hydroxymethyluracil + 2-deoxy-D-ribose 5-phosphate. Part of a nucleotide salvage pathway that eliminates epigenetically modified 5-hydroxymethyl-dCMP (hmdCMP) in a two-step process entailing deamination to cytotoxic 5-hydroxymethyl-dUMP (hmdUMP), followed by its hydrolysis into 5-hydroxymethyluracil (hmU) and 2-deoxy-D-ribose 5-phosphate (deoxyribosephosphate). Catalyzes the second step in that pathway, the hydrolysis of the N-glycosidic bond in hmdUMP, degrading this cytotoxic nucleotide to avoid its genomic integration. The polypeptide is 5-hydroxymethyl-dUMP N-hydrolase (Mus musculus (Mouse)).